We begin with the raw amino-acid sequence, 566 residues long: MTLLENDAATDPVYTVGDYLLDRLAELGVSEIFGVPGDYNLEFLDHIVAHPIIRWVGSANELNAGYAADGYGRLRGMSAVVTTFGVGELSATNAIAGSYAEHVPVVHIVGGPSKDAQGARRALHHSLGDGDFEHFFRISREITCAQANLMPATACREIDRVICEVREQKRPGYLLLSTDVARFPTEPPGAPLPPLAGGTSPRALSLFTRAAADLIGDHQLTVLADLLVHRLQAIKELEALLSADVVPHATLMWGKSLLDESSANFLGIYAGAASAEPVRKAIEQAPVLVTAGVVFTDMVSGFFSQRIDPARTIDIGQYQSSVADQVFAPLEMGAALQAVATILTKRGISSPPVAVPPAEPGPPTPRRDEPLNQEMLWNRLCEALTPGNVVLADQGTSFYGMADHRLPQGVTFIGQPLWGSIGYTLPAALGAAVAHPDRRTVLLIGDGAAQLTVQELGIFSREGLSPVIVVVNNDGYTVERAIHGETATYNDIVSWRWTDVPGALGVTNHLAMRAENYGELDDALTAAAEQQDRMVVVEAVLPRLDVPPLLDELVGSLSPPECGGRS.

Thiamine diphosphate is bound at residue Glu-61. A thiamine pyrophosphate binding region spans residues 396–478; the sequence is TSFYGMADHR…VVVNNDGYTV (83 aa). The Mg(2+) site is built by Asp-446, Asn-473, and Gly-475.

The protein belongs to the TPP enzyme family. A metal cation is required as a cofactor. Thiamine diphosphate serves as cofactor.

Functionally, decarboxylates branched-chain and aromatic alpha-keto acids to aldehydes. The sequence is that of Alpha-keto-acid decarboxylase (kdc) from Mycobacterium ulcerans (strain Agy99).